A 231-amino-acid chain; its full sequence is Acyl-protein thioesterase 2 (231 aa).

Cys2 is lipidated: S-palmitoyl cysteine. Position 82 is a phosphoserine (Ser82). Catalysis depends on charge relay system residues Ser122, Asp176, and His210.

The protein belongs to the AB hydrolase superfamily. AB hydrolase 2 family.

The protein resides in the cytoplasm. It carries out the reaction S-hexadecanoyl-L-cysteinyl-[protein] + H2O = L-cysteinyl-[protein] + hexadecanoate + H(+). The enzyme catalyses prostaglandin E2 1-glyceryl ester + H2O = prostaglandin E2 + glycerol + H(+). It catalyses the reaction 1-hexadecanoyl-sn-glycero-3-phosphocholine + H2O = sn-glycerol 3-phosphocholine + hexadecanoate + H(+). The catalysed reaction is 1-octadecanoyl-sn-glycero-3-phosphocholine + H2O = octadecanoate + sn-glycerol 3-phosphocholine + H(+). It carries out the reaction 1-hexadecanoyl-sn-glycero-3-phosphate + H2O = sn-glycerol 3-phosphate + hexadecanoate + H(+). The enzyme catalyses 1-hexadecanoyl-sn-glycero-3-phospho-L-serine + H2O = sn-glycero-3-phospho-L-serine + hexadecanoate + H(+). Acts as an acyl-protein thioesterase hydrolyzing fatty acids from S-acylated cysteine residues in proteins such as trimeric G alpha proteins, GSDMD, GAP43, ZDHHC6 or HRAS. Deacylates GAP43. Mediates depalmitoylation of ZDHHC6. Has lysophospholipase activity. Hydrolyzes prostaglandin glycerol esters (PG-Gs) in the following order prostaglandin D2-glycerol ester (PGD2-G) &gt; prostaglandin E2 glycerol ester (PGE2-G) &gt; prostaglandin F2-alpha-glycerol ester (PGF2-alpha-G). Hydrolyzes 1-arachidonoylglycerol but not 2-arachidonoylglycerol or arachidonoylethanolamide. The chain is Acyl-protein thioesterase 2 (Lypla2) from Rattus norvegicus (Rat).